We begin with the raw amino-acid sequence, 364 residues long: GMP reductase (364 aa).

NADP(+) is bound by residues 26–27, Lys78, 132–134, and 183–184; these read SR, DVA, and IG. Gly184, Gly186, and Cys189 together coordinate K(+). Cys189 (thioimidate intermediate) is an active-site residue. Thr191 (proton donor/acceptor) is an active-site residue. Position 192 (Arg192) interacts with K(+). GMP is bound by residues 222–224, 245–246, 271–273, and 289–293; these read DGG, GG, GMS, and RASEG. NADP(+) is bound by residues Met272, 288 to 289, and 317 to 320; these read YR and SACT.

Belongs to the IMPDH/GMPR family. GuaC type 1 subfamily. As to quaternary structure, homotetramer.

The catalysed reaction is IMP + NH4(+) + NADP(+) = GMP + NADPH + 2 H(+). Catalyzes the irreversible NADPH-dependent deamination of GMP to IMP. It functions in the conversion of nucleobase, nucleoside and nucleotide derivatives of G to A nucleotides, and in maintaining the intracellular balance of A and G nucleotides. In Onchocerca volvulus, this protein is GMP reductase (gmr-1).